We begin with the raw amino-acid sequence, 119 residues long: Large ribosomal subunit protein bL20 (119 aa).

It belongs to the bacterial ribosomal protein bL20 family.

Functionally, binds directly to 23S ribosomal RNA and is necessary for the in vitro assembly process of the 50S ribosomal subunit. It is not involved in the protein synthesizing functions of that subunit. In Shouchella clausii (strain KSM-K16) (Alkalihalobacillus clausii), this protein is Large ribosomal subunit protein bL20.